The sequence spans 1435 residues: Nitric oxide synthase 1 (1435 aa).

The interaction with NOSIP stretch occupies residues methionine 1–leucine 206. The PDZ domain occupies serine 17 to glycine 99. 2 disordered regions span residues threonine 110–glycine 201 and asparagine 277–proline 304. An interaction with DYNLL1/PIN region spans residues glutamine 164–aspartate 246. The segment covering glycine 290–proline 300 has biased composition (polar residues). Serine 340 is a (6R)-L-erythro-5,6,7,8-tetrahydrobiopterin binding site. A heme b-binding site is contributed by cysteine 421. Glutamine 484, tryptophan 593, tyrosine 594, and glutamate 598 together coordinate L-arginine. Residues valine 683, tryptophan 684, and phenylalanine 697 each coordinate (6R)-L-erythro-5,6,7,8-tetrahydrobiopterin. Tyrosine 712 contributes to the heme b binding site. The interval lysine 731–methionine 751 is calmodulin-binding. The Flavodoxin-like domain occupies alanine 761–phenylalanine 941. Residues threonine 767, glutamate 768, threonine 769, lysine 771, serine 772, serine 813, threonine 814, and glycine 818 each coordinate FMN. Residues serine 853, serine 863, and serine 864 each carry the phosphoserine modification. FMN-binding residues include serine 892, histidine 897, cysteine 899, glutamate 925, and glutamine 929. The 248-residue stretch at lysine 996 to proline 1243 folds into the FAD-binding FR-type domain. Arginine 1016 serves as a coordination point for NADP(+). Histidine 1038, arginine 1179, tyrosine 1180, tyrosine 1181, serine 1182, threonine 1197, and alanine 1199 together coordinate FAD. Serine 1202 provides a ligand contact to NADP(+). Tyrosine 1203, valine 1216, cysteine 1217, and serine 1218 together coordinate FAD. Threonine 1257, arginine 1290, serine 1319, arginine 1320, lysine 1326, tyrosine 1328, glutamine 1330, aspartate 1363, threonine 1404, and arginine 1406 together coordinate NADP(+).

This sequence belongs to the NOS family. Homodimer. Interacts with DLG4; the interaction possibly being prevented by the association between NOS1 and CAPON. Forms a ternary complex with CAPON and RASD1. Forms a ternary complex with CAPON and SYN1. Interacts with ZDHHC23. Interacts with NOSIP; which may impair its synaptic location. Interacts with HTR4. Interacts with SLC6A4. Interacts with VAC14. Interacts (via N-terminal domain) with DLG4 (via N-terminal tandem pair of PDZ domains). Interacts with SLC6A4. Forms a complex with ASL, ASS1 and SLC7A1; the complex regulates cell-autonomous L-arginine synthesis and citrulline recycling while channeling extracellular L-arginine to nitric oxide synthesis pathway. Interacts with DMD; localizes NOS1 to sarcolemma in muscle cells. Interacts with DYNLL1; inhibits the nitric oxide synthase activity. Requires heme b as cofactor. FAD is required as a cofactor. FMN serves as cofactor. The cofactor is (6R)-L-erythro-5,6,7,8-tetrahydrobiopterin. In terms of processing, ubiquitinated; mediated by STUB1/CHIP in the presence of Hsp70 and Hsp40 (in vitro).

It is found in the cell membrane. The protein localises to the sarcolemma. It localises to the cell projection. Its subcellular location is the dendritic spine. It catalyses the reaction 2 L-arginine + 3 NADPH + 4 O2 + H(+) = 2 L-citrulline + 2 nitric oxide + 3 NADP(+) + 4 H2O. With respect to regulation, stimulated by calcium/calmodulin. Inhibited by DYNLL1 that prevents the dimerization of the protein. Inhibited by NOSIP. Its function is as follows. Produces nitric oxide (NO) which is a messenger molecule with diverse functions throughout the body. In the brain and peripheral nervous system, NO displays many properties of a neurotransmitter. Probably has nitrosylase activity and mediates cysteine S-nitrosylation of cytoplasmic target proteins such SRR. The sequence is that of Nitric oxide synthase 1 (NOS1) from Oryctolagus cuniculus (Rabbit).